An 849-amino-acid chain; its full sequence is Disks large homolog 3 (849 aa).

The interval 32 to 101 (DWQVPDPYGP…GKSTPKLNGS (70 aa)) is disordered. The span at 41–53 (PSGGNGASSGYGG) shows a compositional bias: gly residues. Over residues 57 to 69 (QTLPSQAGATPTP) the composition is skewed to polar residues. PDZ domains are found at residues 149 to 235 (EIVL…VRRR), 244 to 330 (EVNL…VAKP), and 404 to 484 (KIIL…AQYR). The residue at position 157 (serine 157) is a Phosphoserine. The region spanning 519-589 (KRSLYVRALF…PSKKRVEKKE (71 aa)) is the SH3 domain. The Guanylate kinase-like domain occupies 659-834 (ARPVIILGPM…IYNKIKQIIE (176 aa)). Residue tyrosine 705 is modified to Phosphotyrosine.

The protein belongs to the MAGUK family. In terms of assembly, interacts through its PDZ domains with NETO1, GRIN2B, SYNGAP1 and APC. Interacts through its first two PDZ domains with ERBB4. Interacts through its third PDZ domain with NLGN1, and probably with NLGN2 and NLGN3. Interacts through its guanylate kinase-like domain with DLGAP1, DLGAP2, DLGAP3 and DLGAP4. Interacts with FRMPD4 (via C-terminus). Interacts with LRFN1, LRFN2 and LRFN4. Interacts with FLTP. Interacts with GPR85. Interacts with DGKI (via PDZ-binding motif).

Required for learning most likely through its role in synaptic plasticity following NMDA receptor signaling. This is Disks large homolog 3 (Dlg3) from Mus musculus (Mouse).